The chain runs to 764 residues: Elongation factor G, mitochondrial (764 aa).

Residues 1–23 (MIRSLRAVSRLGARGFSSFAAAR) constitute a mitochondrion transit peptide. The tr-type G domain occupies 56–337 (ARMRNIGISA…AICEYLPDPS (282 aa)). GTP-binding positions include 65-72 (AHIDSGKT), 136-140 (DTPGH), and 190-193 (NKMD).

It belongs to the TRAFAC class translation factor GTPase superfamily. Classic translation factor GTPase family. EF-G/EF-2 subfamily.

The protein localises to the mitochondrion. It functions in the pathway protein biosynthesis; polypeptide chain elongation. In terms of biological role, mitochondrial GTPase that catalyzes the GTP-dependent ribosomal translocation step during translation elongation. During this step, the ribosome changes from the pre-translocational (PRE) to the post-translocational (POST) state as the newly formed A-site-bound peptidyl-tRNA and P-site-bound deacylated tRNA move to the P and E sites, respectively. Catalyzes the coordinated movement of the two tRNA molecules, the mRNA and conformational changes in the ribosome. This Yarrowia lipolytica (strain CLIB 122 / E 150) (Yeast) protein is Elongation factor G, mitochondrial.